We begin with the raw amino-acid sequence, 133 residues long: Ribonuclease P protein component (133 aa).

It belongs to the RnpA family. As to quaternary structure, consists of a catalytic RNA component (M1 or rnpB) and a protein subunit.

It carries out the reaction Endonucleolytic cleavage of RNA, removing 5'-extranucleotides from tRNA precursor.. Functionally, RNaseP catalyzes the removal of the 5'-leader sequence from pre-tRNA to produce the mature 5'-terminus. It can also cleave other RNA substrates such as 4.5S RNA. The protein component plays an auxiliary but essential role in vivo by binding to the 5'-leader sequence and broadening the substrate specificity of the ribozyme. In Paramagnetospirillum magneticum (strain ATCC 700264 / AMB-1) (Magnetospirillum magneticum), this protein is Ribonuclease P protein component.